The following is a 125-amino-acid chain: uncharacterized protein (125 aa).

A helical membrane pass occupies residues 7 to 29 (NCMFLYVYTDVCVRLCASIFYIM).

It localises to the membrane. This is an uncharacterized protein from Saccharomyces cerevisiae (strain ATCC 204508 / S288c) (Baker's yeast).